Here is a 304-residue protein sequence, read N- to C-terminus: UDP-3-O-acyl-N-acetylglucosamine deacetylase (304 aa).

The Zn(2+) site is built by histidine 78, histidine 237, and aspartate 241. The active-site Proton donor is histidine 264.

Belongs to the LpxC family. The cofactor is Zn(2+).

The enzyme catalyses a UDP-3-O-[(3R)-3-hydroxyacyl]-N-acetyl-alpha-D-glucosamine + H2O = a UDP-3-O-[(3R)-3-hydroxyacyl]-alpha-D-glucosamine + acetate. The protein operates within glycolipid biosynthesis; lipid IV(A) biosynthesis; lipid IV(A) from (3R)-3-hydroxytetradecanoyl-[acyl-carrier-protein] and UDP-N-acetyl-alpha-D-glucosamine: step 2/6. Catalyzes the hydrolysis of UDP-3-O-myristoyl-N-acetylglucosamine to form UDP-3-O-myristoylglucosamine and acetate, the committed step in lipid A biosynthesis. The chain is UDP-3-O-acyl-N-acetylglucosamine deacetylase from Legionella pneumophila (strain Lens).